A 449-amino-acid chain; its full sequence is Tryptophan--tRNA ligase (449 aa).

ATP is bound by residues 10-12 (TTT) and 18-19 (GN). The short motif at 11–19 (TTGTPHLGN) is the 'HIGH' region element. Asp143 contacts L-tryptophan. Residues 155-157 (GRD), Leu197, and 204-208 (KMSKS) each bind ATP. The short motif at 204 to 208 (KMSKS) is the 'KMSKS' region element.

Belongs to the class-I aminoacyl-tRNA synthetase family. As to quaternary structure, homodimer.

It localises to the cytoplasm. The catalysed reaction is tRNA(Trp) + L-tryptophan + ATP = L-tryptophyl-tRNA(Trp) + AMP + diphosphate + H(+). Functionally, catalyzes the attachment of tryptophan to tRNA(Trp). This chain is Tryptophan--tRNA ligase, found in Pseudomonas putida (strain ATCC 47054 / DSM 6125 / CFBP 8728 / NCIMB 11950 / KT2440).